A 637-amino-acid polypeptide reads, in one-letter code: Glutamate--cysteine ligase catalytic subunit (637 aa).

At M1 the chain carries N-acetylmethionine. S5 and S8 each carry phosphoserine.

It belongs to the glutamate--cysteine ligase type 3 family. As to quaternary structure, heterodimer of a catalytic heavy chain and a regulatory light chain.

The enzyme catalyses L-cysteine + L-glutamate + ATP = gamma-L-glutamyl-L-cysteine + ADP + phosphate + H(+). It catalyses the reaction (2S)-2-aminobutanoate + L-glutamate + ATP = gamma-L-glutamyl-(2S)-2-aminobutanoate + ADP + phosphate + H(+). The protein operates within sulfur metabolism; glutathione biosynthesis; glutathione from L-cysteine and L-glutamate: step 1/2. Feedback inhibition by glutathione. Functionally, catalyzes the ATP-dependent ligation of L-glutamate and L-cysteine and participates in the first and rate-limiting step in glutathione biosynthesis. The chain is Glutamate--cysteine ligase catalytic subunit from Homo sapiens (Human).